The chain runs to 141 residues: U1 small nuclear ribonucleoprotein C (141 aa).

The Matrin-type zinc-finger motif lies at 4 to 36; that stretch reads YYCEYCDKYLTHDSPSVRKSHTIGKVHQQAVTL. A disordered region spans residues 69-141; sequence LLPPNMVPGQ…SNSPPSNNDQ (73 aa). Residues 83–97 show a composition bias toward pro residues; the sequence is MMPPGQFPFPPPPGQ. 2 stretches are compositionally biased toward low complexity: residues 100–110 and 124–141; these read GGMPPHQQQPM and QQSA…NNDQ.

It belongs to the U1 small nuclear ribonucleoprotein C family. Component of the U1 snRNP. The U1 snRNP is composed of the U1 snRNA and the 7 core Sm proteins SNRPB, SNRPD1, SNRPD2, SNRPD3, SNRPE, SNRPF and SNRPG that assemble in a heptameric protein ring on the Sm site of the small nuclear RNA to form the core snRNP, and at least 3 U1 snRNP-specific proteins SNRNP70/U1-70K, SNRPA/U1-A and SNRPC/U1-C. SNRPC/U1-C interacts with U1 snRNA and the 5' splice-site region of the pre-mRNA.

The protein localises to the nucleus. Its function is as follows. Component of the spliceosomal U1 snRNP, which is essential for recognition of the pre-mRNA 5' splice-site and the subsequent assembly of the spliceosome. SNRPC/U1-C is directly involved in initial 5' splice-site recognition for both constitutive and regulated alternative splicing. The interaction with the 5' splice-site seems to precede base-pairing between the pre-mRNA and the U1 snRNA. Stimulates commitment or early (E) complex formation by stabilizing the base pairing of the 5' end of the U1 snRNA and the 5' splice-site region. This is U1 small nuclear ribonucleoprotein C from Heterostelium pallidum (strain ATCC 26659 / Pp 5 / PN500) (Cellular slime mold).